A 268-amino-acid chain; its full sequence is Tryptophan synthase alpha chain (268 aa).

Residues glutamate 49 and aspartate 60 each act as proton acceptor in the active site.

It belongs to the TrpA family. As to quaternary structure, tetramer of two alpha and two beta chains.

The catalysed reaction is (1S,2R)-1-C-(indol-3-yl)glycerol 3-phosphate + L-serine = D-glyceraldehyde 3-phosphate + L-tryptophan + H2O. It participates in amino-acid biosynthesis; L-tryptophan biosynthesis; L-tryptophan from chorismate: step 5/5. Its function is as follows. The alpha subunit is responsible for the aldol cleavage of indoleglycerol phosphate to indole and glyceraldehyde 3-phosphate. This chain is Tryptophan synthase alpha chain, found in Yersinia pseudotuberculosis serotype O:3 (strain YPIII).